We begin with the raw amino-acid sequence, 361 residues long: NAD(P)H-quinone oxidoreductase subunit 1, chloroplastic (361 aa).

7 helical membrane-spanning segments follow: residues 28–48, 99–119, 128–148, 249–269, 270–290, 301–321, and 341–361; these read IWVL…VLVI, FTIG…VIPF, LSIG…GLLM, YSGI…LVSS, LFVT…LFVP, TIIC…ISIA, and FLLP…LLSL.

The protein belongs to the complex I subunit 1 family. As to quaternary structure, NDH is composed of at least 16 different subunits, 5 of which are encoded in the nucleus.

The protein resides in the plastid. Its subcellular location is the chloroplast thylakoid membrane. It catalyses the reaction a plastoquinone + NADH + (n+1) H(+)(in) = a plastoquinol + NAD(+) + n H(+)(out). The enzyme catalyses a plastoquinone + NADPH + (n+1) H(+)(in) = a plastoquinol + NADP(+) + n H(+)(out). Functionally, NDH shuttles electrons from NAD(P)H:plastoquinone, via FMN and iron-sulfur (Fe-S) centers, to quinones in the photosynthetic chain and possibly in a chloroplast respiratory chain. The immediate electron acceptor for the enzyme in this species is believed to be plastoquinone. Couples the redox reaction to proton translocation, and thus conserves the redox energy in a proton gradient. This Jasminum nudiflorum (Winter jasmine) protein is NAD(P)H-quinone oxidoreductase subunit 1, chloroplastic.